Reading from the N-terminus, the 185-residue chain is Ribosome-recycling factor (185 aa).

It belongs to the RRF family.

Its subcellular location is the cytoplasm. Its function is as follows. Responsible for the release of ribosomes from messenger RNA at the termination of protein biosynthesis. May increase the efficiency of translation by recycling ribosomes from one round of translation to another. This chain is Ribosome-recycling factor, found in Desulfatibacillum aliphaticivorans.